Consider the following 317-residue polypeptide: Porphobilinogen deaminase (317 aa).

Cys-245 carries the post-translational modification S-(dipyrrolylmethanemethyl)cysteine.

This sequence belongs to the HMBS family. Monomer. Dipyrromethane serves as cofactor.

The catalysed reaction is 4 porphobilinogen + H2O = hydroxymethylbilane + 4 NH4(+). It functions in the pathway porphyrin-containing compound metabolism; protoporphyrin-IX biosynthesis; coproporphyrinogen-III from 5-aminolevulinate: step 2/4. The protein operates within porphyrin-containing compound metabolism; chlorophyll biosynthesis. In terms of biological role, tetrapolymerization of the monopyrrole PBG into the hydroxymethylbilane pre-uroporphyrinogen in several discrete steps. This Synechococcus sp. (strain CC9605) protein is Porphobilinogen deaminase.